The following is a 181-amino-acid chain: HGPRTase-like protein 1 (181 aa).

The protein belongs to the purine/pyrimidine phosphoribosyltransferase family. Archaeal HPRT subfamily.

Its function is as follows. May catalyze a purine salvage reaction, the substrate is unknown. The protein is HGPRTase-like protein 1 of Halalkalicoccus jeotgali (strain DSM 18796 / CECT 7217 / JCM 14584 / KCTC 4019 / B3).